Consider the following 141-residue polypeptide: ATP synthase epsilon chain (141 aa).

The protein belongs to the ATPase epsilon chain family. F-type ATPases have 2 components, CF(1) - the catalytic core - and CF(0) - the membrane proton channel. CF(1) has five subunits: alpha(3), beta(3), gamma(1), delta(1), epsilon(1). CF(0) has three main subunits: a, b and c.

It is found in the cell inner membrane. Produces ATP from ADP in the presence of a proton gradient across the membrane. This is ATP synthase epsilon chain from Gluconacetobacter diazotrophicus (strain ATCC 49037 / DSM 5601 / CCUG 37298 / CIP 103539 / LMG 7603 / PAl5).